We begin with the raw amino-acid sequence, 419 residues long: UDP-N-acetylglucosamine 1-carboxyvinyltransferase (419 aa).

22–23 (KN) contacts phosphoenolpyruvate. Arginine 91 contacts UDP-N-acetyl-alpha-D-glucosamine. Residue cysteine 115 is the Proton donor of the active site. Cysteine 115 bears the 2-(S-cysteinyl)pyruvic acid O-phosphothioketal mark. UDP-N-acetyl-alpha-D-glucosamine-binding positions include 120–124 (RPVDL), 160–163 (KVSV), aspartate 305, and isoleucine 327.

This sequence belongs to the EPSP synthase family. MurA subfamily.

It localises to the cytoplasm. It catalyses the reaction phosphoenolpyruvate + UDP-N-acetyl-alpha-D-glucosamine = UDP-N-acetyl-3-O-(1-carboxyvinyl)-alpha-D-glucosamine + phosphate. It functions in the pathway cell wall biogenesis; peptidoglycan biosynthesis. Its function is as follows. Cell wall formation. Adds enolpyruvyl to UDP-N-acetylglucosamine. This chain is UDP-N-acetylglucosamine 1-carboxyvinyltransferase, found in Klebsiella pneumoniae (strain 342).